Here is a 232-residue protein sequence, read N- to C-terminus: Ubiquinone biosynthesis O-methyltransferase (232 aa).

S-adenosyl-L-methionine is bound by residues Arg36, Gly55, Asp76, and Leu120.

This sequence belongs to the methyltransferase superfamily. UbiG/COQ3 family.

The enzyme catalyses a 3-demethylubiquinol + S-adenosyl-L-methionine = a ubiquinol + S-adenosyl-L-homocysteine + H(+). It carries out the reaction a 3-(all-trans-polyprenyl)benzene-1,2-diol + S-adenosyl-L-methionine = a 2-methoxy-6-(all-trans-polyprenyl)phenol + S-adenosyl-L-homocysteine + H(+). It functions in the pathway cofactor biosynthesis; ubiquinone biosynthesis. In terms of biological role, O-methyltransferase that catalyzes the 2 O-methylation steps in the ubiquinone biosynthetic pathway. The sequence is that of Ubiquinone biosynthesis O-methyltransferase from Dechloromonas aromatica (strain RCB).